A 203-amino-acid polypeptide reads, in one-letter code: Endo-type membrane-bound lytic murein transglycosylase A (203 aa).

Positions 1-15 are cleaved as a signal peptide; it reads MKLRWLMWLVVFLAG. Cysteine 16 carries N-palmitoyl cysteine lipidation. A lipid anchor (S-diacylglycerol cysteine) is attached at cysteine 16.

It belongs to the transglycosylase Slt family.

It localises to the cell outer membrane. The catalysed reaction is Endolytic cleavage of the (1-&gt;4)-beta-glycosidic linkage between N-acetylmuramic acid (MurNAc) and N-acetylglucosamine (GlcNAc) residues in peptidoglycan with concomitant formation of a 1,6-anhydrobond in the MurNAc residue.. Murein-degrading enzyme. May play a role in recycling of muropeptides during cell elongation and/or cell division. Preferentially cleaves at a distance of more than two disaccharide units from the ends of the glycan chain. In Cronobacter sakazakii (strain ATCC BAA-894) (Enterobacter sakazakii), this protein is Endo-type membrane-bound lytic murein transglycosylase A.